A 582-amino-acid polypeptide reads, in one-letter code: Formate--tetrahydrofolate ligase (582 aa).

Position 65-72 (65-72) interacts with ATP; sequence TPLGEGKT.

Belongs to the formate--tetrahydrofolate ligase family.

It catalyses the reaction (6S)-5,6,7,8-tetrahydrofolate + formate + ATP = (6R)-10-formyltetrahydrofolate + ADP + phosphate. It participates in one-carbon metabolism; tetrahydrofolate interconversion. The protein is Formate--tetrahydrofolate ligase of Vibrio vulnificus (strain CMCP6).